We begin with the raw amino-acid sequence, 184 residues long: Mitochondrial import inner membrane translocase subunit TIM22 (184 aa).

Residues 1-26 (MSLWGVYTGPQPPKKPLQEMTQEEQA) are disordered. Cystine bridges form between C40/C118 and C137/C156. The next 2 membrane-spanning stretches (helical) occupy residues 45-65 (VMAG…MASM) and 151-171 (AALV…MYLN).

Belongs to the Tim17/Tim22/Tim23 family. Component of the TIM22 complex, whose core is composed of TIM22 and TIM54, associated with the 70 kDa heterohexamer composed of TIM9 and TIM10 (or TIM8 and TIM13).

Its subcellular location is the mitochondrion inner membrane. In terms of biological role, essential core component of the TIM22 complex, a complex that mediates the import and insertion of multi-pass transmembrane proteins into the mitochondrial inner membrane. In the TIM22 complex, it constitutes the voltage-activated and signal-gated channel. Forms a twin-pore translocase that uses the membrane potential as external driving force in 2 voltage-dependent steps. This Candida albicans (strain SC5314 / ATCC MYA-2876) (Yeast) protein is Mitochondrial import inner membrane translocase subunit TIM22.